Consider the following 410-residue polypeptide: Chorismate synthase (410 aa).

Arg43 and Arg49 together coordinate NADP(+). FMN is bound by residues Arg143–Ser145, Gln264–Ala265, Gly308, Lys323–Thr327, and Arg349.

This sequence belongs to the chorismate synthase family. As to quaternary structure, homotetramer. The cofactor is FMNH2.

The enzyme catalyses 5-O-(1-carboxyvinyl)-3-phosphoshikimate = chorismate + phosphate. It functions in the pathway metabolic intermediate biosynthesis; chorismate biosynthesis; chorismate from D-erythrose 4-phosphate and phosphoenolpyruvate: step 7/7. Its function is as follows. Catalyzes the anti-1,4-elimination of the C-3 phosphate and the C-6 proR hydrogen from 5-enolpyruvylshikimate-3-phosphate (EPSP) to yield chorismate, which is the branch point compound that serves as the starting substrate for the three terminal pathways of aromatic amino acid biosynthesis. This reaction introduces a second double bond into the aromatic ring system. The polypeptide is Chorismate synthase (Corynebacterium glutamicum (strain ATCC 13032 / DSM 20300 / JCM 1318 / BCRC 11384 / CCUG 27702 / LMG 3730 / NBRC 12168 / NCIMB 10025 / NRRL B-2784 / 534)).